The primary structure comprises 629 residues: MMWRDALSLVEEEDPHMKVSLGSSDMGVSAHLQSSKTGTTRFFTSNTHSSVVLQGFDQLRVEGLLCDVTLVPGDGDEVFPVHRAMMASASDYFKAMFTGGMKEQDLMCIKLHGVNKIGLKKIIDFIYTAKLSLNMDNLQDTLEAASFLQILPVLDFCKVFLISGVSLENCVEVGRIANTYNLTEVDKYVNNFILKNFPALLSTGEFVKLPFERLAFVLSSNSLKHCTELELFKAACRWLRFEEPRMEYAAKLMKNIRFPLMTPQDLINYVQTVDFMRTDNTCVNLLLEASNYQMMPYMQPVMQSERTAIRSDSTHLVTLGGVLRQQLVVSKELRMYDEKAHEWKSLAPMDAPRYQHGIAVIGNFLYVVGGQSNYDTKGKTAVDTVFRFDPRYNKWMQVASLNEKRTFFHLSALKGHLYAVGGRNAAGELATVECYNPRMNEWSYVAKMNEPHYGHAGTVYGGLMYISGGITHDTFQKELMCFDPDTDKWTQKAPMTTVRGLHCMCTVGDKLYVIGGNHFRGTSDYDDVLSCEYYSTTLDQWTPIAAMLRGQSDVGVAVFENKIYVVGGYSWNNRCMVEIVQKYDPEKDEWHKVFDLPESLGGIRACTLTVFPPEDNTGSPSRESPLSAP.

The BTB domain maps to 66 to 135; that stretch reads CDVTLVPGDG…IYTAKLSLNM (70 aa). The BACK domain occupies 170–271; it reads CVEVGRIANT…TPQDLINYVQ (102 aa). Kelch repeat units follow at residues 315–363, 364–415, 416–462, 464–509, 511–561, and 562–610; these read HLVT…VIGN, FLYV…ALKG, HLYA…VYGG, MYIS…TVGD, LYVI…VFEN, and KIYV…TLTV.

Component of the BCR(KLHL9-KLHL13) E3 ubiquitin ligase complex, at least composed of CUL3, KLHL9, KLHL13 and RBX1. Interacts with AURKB.

Its pathway is protein modification; protein ubiquitination. Its function is as follows. Substrate-specific adapter of a BCR (BTB-CUL3-RBX1) E3 ubiquitin-protein ligase complex required for mitotic progression and cytokinesis. The BCR(KLHL9-KLHL13) E3 ubiquitin ligase complex mediates the ubiquitination of AURKB and controls the dynamic behavior of AURKB on mitotic chromosomes and thereby coordinates faithful mitotic progression and completion of cytokinesis. This Gallus gallus (Chicken) protein is Kelch-like protein 13 (KLHL13).